Reading from the N-terminus, the 122-residue chain is MEKNSFKLSNPLEMRMAESTRIRAKYPERVPVIVEKAGQSDVPDIDKKKYLVPADLTIGQFVYVVRKRIKLGAEKAIFVFVKNTLPPTAALMSAIYEEHKDEDGFLYMTYSGENTFGGSFYC.

A lipid anchor (Phosphatidylethanolamine amidated glycine) is attached at Gly117. Positions 118 to 122 (GSFYC) are cleaved as a propeptide — removed in mature form.

This sequence belongs to the ATG8 family. As to quaternary structure, interacts with ATG4. Interacts with NBR1. Post-translationally, the C-terminal 5 residues are removed by ATG4 to expose Gly-117 at the C-terminus. This Gly-117 forms then a thioester bond with the 'Cys-558' of ATG7 (E1-like activating enzyme) before being transferred to the 'Cys-258' of ATG3 (the specific E2 conjugating enzyme), in order to be finally amidated with phosphatidylethanolamine. This lipid modification anchors ATG8 to autophagosomes. As to expression, constitutively expressed.

It is found in the cytoplasmic vesicle. It localises to the autophagosome membrane. The protein resides in the vacuole membrane. Its subcellular location is the cytoplasm. The protein localises to the cytoskeleton. Ubiquitin-like modifier involved in autophagosomes formation. May mediate the delivery of the autophagosomes to the vacuole via the microtubule cytoskeleton. In Arabidopsis thaliana (Mouse-ear cress), this protein is Autophagy-related protein 8b (ATG8B).